Consider the following 424-residue polypeptide: Serine hydroxymethyltransferase (424 aa).

(6S)-5,6,7,8-tetrahydrofolate contacts are provided by residues L123 and 127 to 129; that span reads GHL. K232 is modified (N6-(pyridoxal phosphate)lysine). E245 serves as a coordination point for (6S)-5,6,7,8-tetrahydrofolate.

The protein belongs to the SHMT family. As to quaternary structure, homodimer. Pyridoxal 5'-phosphate serves as cofactor.

The protein localises to the cytoplasm. It catalyses the reaction (6R)-5,10-methylene-5,6,7,8-tetrahydrofolate + glycine + H2O = (6S)-5,6,7,8-tetrahydrofolate + L-serine. It participates in one-carbon metabolism; tetrahydrofolate interconversion. Its pathway is amino-acid biosynthesis; glycine biosynthesis; glycine from L-serine: step 1/1. Its function is as follows. Catalyzes the reversible interconversion of serine and glycine with tetrahydrofolate (THF) serving as the one-carbon carrier. This reaction serves as the major source of one-carbon groups required for the biosynthesis of purines, thymidylate, methionine, and other important biomolecules. Also exhibits THF-independent aldolase activity toward beta-hydroxyamino acids, producing glycine and aldehydes, via a retro-aldol mechanism. This chain is Serine hydroxymethyltransferase, found in Kocuria rhizophila (strain ATCC 9341 / DSM 348 / NBRC 103217 / DC2201).